Here is a 65-residue protein sequence, read N- to C-terminus: Large ribosomal subunit protein bL35 (65 aa).

The tract at residues 1-52 (MPKMKSNRAAAKRFKRTANGGFKSGNSFTSHRFHGKTKKQRRQLRGLSMMDK) is disordered. Residues 31 to 44 (HRFHGKTKKQRRQL) show a composition bias toward basic residues.

The protein belongs to the bacterial ribosomal protein bL35 family.

The sequence is that of Large ribosomal subunit protein bL35 from Limosilactobacillus reuteri (strain DSM 20016) (Lactobacillus reuteri).